The sequence spans 2545 residues: Methylphloroacetophenone synthase (2545 aa).

The segment at 8 to 261 (AFGALAPWPA…HVAIHEGIPQ (254 aa)) is N-terminal acylcarrier protein transacylase (SAT) domain. Positions 383–798 (KDAIAIIGMG…GSNAAMIVLE (416 aa)) constitute a Ketosynthase family 3 (KS3) domain. Residues C547, H682, and H721 each act as for beta-ketoacyl synthase activity in the active site. Residues 914-1218 (LCFGGQVSDR…VSLQLNKPNS (305 aa)) are malonyl-CoA:ACP transacylase (MAT) domain. The For acyl/malonyl transferase activity role is filled by S1001. Residues 1293-1423 (LPAVLIRLKS…GTVNLKVADD (131 aa)) form an N-terminal hotdog fold region. The PKS/mFAS DH domain occupies 1293–1605 (LPAVLIRLKS…FTDIRRPVPI (313 aa)). The product template (PT) domain stretch occupies residues 1296–1604 (VLIRLKSFDS…NFTDIRRPVP (309 aa)). Positions 1449-1605 (RSESLRGNVL…FTDIRRPVPI (157 aa)) are C-terminal hotdog fold. Residues 1657 to 1731 (TSIYEDICGL…SLVDYLHGKG (75 aa)) enclose the Carrier domain. Position 1691 is an O-(pantetheine 4'-phosphoryl)serine (S1691). Residues 1748-1768 (SSSHAISTGASSPPDSSGASA) show a composition bias toward low complexity. Residues 1748–1773 (SSSHAISTGASSPPDSSGASAMTTPP) are disordered. Positions 1931–2163 (FGASETKLLN…GFKHVSWTDG (233 aa)) are methyltransferase (CMeT) domain. Positions 2198-2544 (AGVPMEEVVW…YDFICRQLGM (347 aa)) are claisen cyclase (CLC) domain. Catalysis depends on for thioesterase activity residues S2321, D2481, and H2513.

In terms of biological role, methylphloroacetophenone synthase; part of the gene cluster that mediates the biosynthesis of usnic acid, a dibenzofuran lichen product possessing a broad spectrum of biological activities. Two genes, mpas and mpao, comprise the usnic acid biosynthetic gene cluster with a single post-PKS enzyme, the methylphloracetophenone oxidase (mpao). The methylphloroacetophenone synthase (mpas) is a non-reducing polyketide synthase that produces methylphloracetophenone from acetate via a methylated tetraketide intermediate. The methylphloroacetophenone oxidase then carries out the oxidative dimerization of methylphloracetophenone to usnic acid. The sequence is that of Methylphloroacetophenone synthase from Cladonia uncialis (Cup lichen).